Here is a 191-residue protein sequence, read N- to C-terminus: Gene BABR protein 1 (191 aa).

In Babesia bovis, this protein is Gene BABR protein 1.